Consider the following 331-residue polypeptide: Glycerol-3-phosphate dehydrogenase [NAD(P)+] (331 aa).

The NADPH site is built by Ser10, Trp11, and Lys101. The sn-glycerol 3-phosphate site is built by Lys101, Gly132, and Ser134. NADPH is bound at residue Ala136. 5 residues coordinate sn-glycerol 3-phosphate: Lys188, Asp241, Ser251, Arg252, and Asn253. Lys188 acts as the Proton acceptor in catalysis. Arg252 contacts NADPH. NADPH contacts are provided by Val276 and Glu278.

Belongs to the NAD-dependent glycerol-3-phosphate dehydrogenase family.

It is found in the cytoplasm. It catalyses the reaction sn-glycerol 3-phosphate + NAD(+) = dihydroxyacetone phosphate + NADH + H(+). The catalysed reaction is sn-glycerol 3-phosphate + NADP(+) = dihydroxyacetone phosphate + NADPH + H(+). Its pathway is membrane lipid metabolism; glycerophospholipid metabolism. In terms of biological role, catalyzes the reduction of the glycolytic intermediate dihydroxyacetone phosphate (DHAP) to sn-glycerol 3-phosphate (G3P), the key precursor for phospholipid synthesis. The chain is Glycerol-3-phosphate dehydrogenase [NAD(P)+] from Acholeplasma laidlawii (strain PG-8A).